A 578-amino-acid chain; its full sequence is Keratin, type II cytoskeletal 1b (578 aa).

The tract at residues 1-163 is head; that stretch reads MSHQFSSQSA…DPEIQRIKTQ (163 aa). At Arg-95 the chain carries Omega-N-methylarginine. The tract at residues 164–200 is coil 1A; sequence EREQIMVLNNKFASFIDKVRFLEQQNQVLQTKWELLQ. In terms of domain architecture, IF rod spans 164 to 477; that stretch reads EREQIMVLNN…QLLEGEESRM (314 aa). Positions 201–219 are linker 1; the sequence is QVNTSTGTNNLEPLLENYI. The tract at residues 220–311 is coil 1B; sequence GDLRRQVDLL…LFLTELSQVQ (92 aa). The linker 12 stretch occupies residues 312 to 335; it reads THISDTNVILSMDNNRSLDLDSII. The tract at residues 336 to 474 is coil 2; it reads DAVRTQYELI…TYRQLLEGEE (139 aa). Residues 475–578 form a tail region; it reads SRMSGELQSH…TNTSHRRILE (104 aa). Omega-N-methylarginine is present on Arg-523. The segment covering 547 to 556 has biased composition (gly residues); the sequence is GSYGGSGRSG. Residues 547 to 578 are disordered; it reads GSYGGSGRSGRGSSRVQIIQTSTNTSHRRILE. Over residues 562–571 the composition is skewed to polar residues; it reads VQIIQTSTNT.

It belongs to the intermediate filament family. Undergoes deimination of some arginine residues (citrullination). As to expression, expressed exclusively in skin.

The protein is Keratin, type II cytoskeletal 1b (KRT77) of Homo sapiens (Human).